The chain runs to 317 residues: Melanocyte-stimulating hormone receptor (317 aa).

Residues 1 to 37 are Extracellular-facing; it reads MPVQGSQRRLLGSLNSTPTATPHLGLAANQTGARCLE. A glycan (N-linked (GlcNAc...) asparagine) is linked at Asn29. The chain crosses the membrane as a helical span at residues 38-63; it reads VSVPDGLFLSLGLVSLVENVLVVTAI. Topologically, residues 64–72 are cytoplasmic; sequence AKNRNLHSP. Residues 73-93 form a helical membrane-spanning segment; the sequence is MYCFICCLALSDLLVSGSNML. The Extracellular portion of the chain corresponds to 94-118; the sequence is ETAVTLLLEAGALAARAAVVQQLDN. The chain crosses the membrane as a helical span at residues 119 to 140; that stretch reads VIDVITCSSMLSSLCFLGAIAV. The Cytoplasmic segment spans residues 141–163; that stretch reads DRYISIFYALRYHSIVTLPRARR. The chain crosses the membrane as a helical span at residues 164–183; the sequence is AVAAIWVASVLFSTLFIAYY. At 184–191 the chain is on the extracellular side; it reads DHAAVLLC. Residues 192-211 form a helical membrane-spanning segment; it reads LVIFFLAMLVLMAVLYVHML. Over 212–240 the chain is Cytoplasmic; that stretch reads ARACQHAQGIARLHKRQRLAHQGFGLKGA. Residues 241–266 traverse the membrane as a helical segment; sequence ATLTILLGIFFLCWGPFFLHLTLIVL. Residues 267–279 are Extracellular-facing; sequence CPQHPTCSCIFKN. Residues 280 to 300 form a helical membrane-spanning segment; sequence FNLFLALIICNAIIDPLIYAF. Over 301 to 317 the chain is Cytoplasmic; that stretch reads RSQELRRTLKEVLLCSW. Cys315 carries S-palmitoyl cysteine lipidation.

This sequence belongs to the G-protein coupled receptor 1 family. Interacts with MGRN1, but does not undergo MGRN1-mediated ubiquitination; this interaction competes with GNAS-binding and thus inhibits agonist-induced cAMP production. Interacts with OPN3; the interaction results in a decrease in MC1R-mediated cAMP signaling and ultimately a decrease in melanin production in melanocytes.

It localises to the cell membrane. Its function is as follows. Receptor for MSH (alpha, beta and gamma) and ACTH. The activity of this receptor is mediated by G proteins which activate adenylate cyclase. Mediates melanogenesis, the production of eumelanin (black/brown) and phaeomelanin (red/yellow), via regulation of cAMP signaling in melanocytes. This Papio hamadryas (Hamadryas baboon) protein is Melanocyte-stimulating hormone receptor (MC1R).